The sequence spans 185 residues: V-type ATP synthase subunit E (185 aa).

Belongs to the V-ATPase E subunit family.

In terms of biological role, produces ATP from ADP in the presence of a proton gradient across the membrane. This is V-type ATP synthase subunit E from Deinococcus geothermalis (strain DSM 11300 / CIP 105573 / AG-3a).